The sequence spans 260 residues: Proliferating cell nuclear antigen (260 aa).

A DNA-binding region spans residues 61-80 (RCDRNISMGMNLGSMAKILK).

The protein belongs to the PCNA family. As to quaternary structure, homotrimer. Forms a complex with activator 1 heteropentamer in the presence of ATP.

It is found in the nucleus. Functionally, this protein is an auxiliary protein of DNA polymerase delta and is involved in the control of eukaryotic DNA replication by increasing the polymerase's processibility during elongation of the leading strand. This is Proliferating cell nuclear antigen (PCNA) from Sarcophaga crassipalpis (Flesh fly).